The chain runs to 141 residues: Large ribosomal subunit protein uL11c (141 aa).

This sequence belongs to the universal ribosomal protein uL11 family. As to quaternary structure, part of the ribosomal stalk of the 50S ribosomal subunit. Interacts with L10 and the large rRNA to form the base of the stalk. L10 forms an elongated spine to which L12 dimers bind in a sequential fashion forming a multimeric L10(L12)X complex.

Its subcellular location is the plastid. The protein localises to the cyanelle. In terms of biological role, forms part of the ribosomal stalk which helps the ribosome interact with GTP-bound translation factors. This chain is Large ribosomal subunit protein uL11c, found in Cyanophora paradoxa.